Consider the following 550-residue polypeptide: Methionine--tRNA ligase (550 aa).

The 'HIGH' region signature appears at 13–23 (PYANGPLHFGH). Residues Cys145, Cys148, Cys158, and Cys161 each coordinate Zn(2+). Residues 331–335 (QFSKS) carry the 'KMSKS' region motif. Lys334 serves as a coordination point for ATP.

It belongs to the class-I aminoacyl-tRNA synthetase family. MetG type 1 subfamily. Monomer. It depends on Zn(2+) as a cofactor.

The protein resides in the cytoplasm. The catalysed reaction is tRNA(Met) + L-methionine + ATP = L-methionyl-tRNA(Met) + AMP + diphosphate. In terms of biological role, is required not only for elongation of protein synthesis but also for the initiation of all mRNA translation through initiator tRNA(fMet) aminoacylation. This chain is Methionine--tRNA ligase, found in Chlamydia trachomatis serovar L2b (strain UCH-1/proctitis).